The primary structure comprises 600 residues: Aspartate--tRNA(Asp/Asn) ligase (600 aa).

Glutamate 181 serves as a coordination point for L-aspartate. The segment at 205–208 (QQYK) is aspartate. Arginine 227 contacts L-aspartate. Residues 227 to 229 (RDE) and glutamine 236 each bind ATP. An L-aspartate-binding site is contributed by histidine 455. Residue glutamate 490 coordinates ATP. An L-aspartate-binding site is contributed by arginine 497. 542–545 (GLDR) contacts ATP.

It belongs to the class-II aminoacyl-tRNA synthetase family. Type 1 subfamily. In terms of assembly, homodimer.

Its subcellular location is the cytoplasm. It catalyses the reaction tRNA(Asx) + L-aspartate + ATP = L-aspartyl-tRNA(Asx) + AMP + diphosphate. Functionally, aspartyl-tRNA synthetase with relaxed tRNA specificity since it is able to aspartylate not only its cognate tRNA(Asp) but also tRNA(Asn). Reaction proceeds in two steps: L-aspartate is first activated by ATP to form Asp-AMP and then transferred to the acceptor end of tRNA(Asp/Asn). The protein is Aspartate--tRNA(Asp/Asn) ligase of Methylacidiphilum infernorum (isolate V4) (Methylokorus infernorum (strain V4)).